Consider the following 159-residue polypeptide: Ribosomal RNA large subunit methyltransferase H (159 aa).

S-adenosyl-L-methionine is bound by residues L76, G108, and 127-132; that span reads FSKMTF.

It belongs to the RNA methyltransferase RlmH family. Homodimer.

The protein localises to the cytoplasm. It carries out the reaction pseudouridine(1915) in 23S rRNA + S-adenosyl-L-methionine = N(3)-methylpseudouridine(1915) in 23S rRNA + S-adenosyl-L-homocysteine + H(+). Functionally, specifically methylates the pseudouridine at position 1915 (m3Psi1915) in 23S rRNA. This Clostridium botulinum (strain 657 / Type Ba4) protein is Ribosomal RNA large subunit methyltransferase H.